Consider the following 532-residue polypeptide: MADAPIAPVVLVILDGWGYRQTTDYNAIAVANTPVMDSLWEAYPKTLIRTSGKDVGLPEGQMGNSEVGHLNIGAGRIVPQELVRITDAIEDGSIFQSPVLINLCDEVKGRGGKLHLIGLSSAGGVHSHLCHLLGLLDLAKLHSVSDVCVHAITDGRDTNPTEGVNVIEAIQAHIDKIGVGRISTVCGRYYAMDRDRRWDRVKKAYDLLTEDGEGDGRSASQILKDFYAQDITDEFILPTRVAPGAIEPGDGIIFYNFRPDRARQLCYAFTMPDFDGFERDLIQPLSFVTFTQYDPKLPVKVVFEPQSLTNILGEVIAKKGLRQFRTAETEKYPHVTYFFNGGLEQPFEGEDRELIQSPMVATYDKAPVMSAEAVTDTACAAIKKGIYSLVVMNYANPDMVGHTGNMEAAVQAIEAVDRCLGRLLGCINKMGGTVLITADHGNAEYMRDEEGNPWTAHTTNPVPFILVEGEKRKIPGHGANVVLRNDGRLADIAPTILDILQLPQPNNMTGKSLIEPAGFDVKTNRTPVRISL.

Mn(2+) is bound by residues D15 and S65. The Phosphoserine intermediate role is filled by S65. Residues H126, 156–157 (RD), R188, R194, 258–261 (RPDR), and K331 each bind substrate. Mn(2+) is bound by residues D398, H402, D439, H440, and H457.

The protein belongs to the BPG-independent phosphoglycerate mutase family. Monomer. Mn(2+) is required as a cofactor.

The catalysed reaction is (2R)-2-phosphoglycerate = (2R)-3-phosphoglycerate. The protein operates within carbohydrate degradation; glycolysis; pyruvate from D-glyceraldehyde 3-phosphate: step 3/5. In terms of biological role, catalyzes the interconversion of 2-phosphoglycerate and 3-phosphoglycerate. The chain is 2,3-bisphosphoglycerate-independent phosphoglycerate mutase from Gloeothece citriformis (strain PCC 7424) (Cyanothece sp. (strain PCC 7424)).